We begin with the raw amino-acid sequence, 275 residues long: Diaminopimelate epimerase (275 aa).

Residues N12, Q45, and N65 each coordinate substrate. C74 acts as the Proton donor in catalysis. Substrate is bound by residues 75–76, N158, N191, and 209–210; these read GN and ER. The Proton acceptor role is filled by C218. 219–220 serves as a coordination point for substrate; it reads GT.

The protein belongs to the diaminopimelate epimerase family. Homodimer.

Its subcellular location is the cytoplasm. It carries out the reaction (2S,6S)-2,6-diaminopimelate = meso-2,6-diaminopimelate. It participates in amino-acid biosynthesis; L-lysine biosynthesis via DAP pathway; DL-2,6-diaminopimelate from LL-2,6-diaminopimelate: step 1/1. Catalyzes the stereoinversion of LL-2,6-diaminopimelate (L,L-DAP) to meso-diaminopimelate (meso-DAP), a precursor of L-lysine and an essential component of the bacterial peptidoglycan. The protein is Diaminopimelate epimerase of Shewanella putrefaciens (strain CN-32 / ATCC BAA-453).